A 281-amino-acid polypeptide reads, in one-letter code: 2,3,4,5-tetrahydropyridine-2,6-dicarboxylate N-succinyltransferase (281 aa).

Residues Arg-108 and Asp-145 each coordinate substrate.

It belongs to the transferase hexapeptide repeat family. Homotrimer.

Its subcellular location is the cytoplasm. It catalyses the reaction (S)-2,3,4,5-tetrahydrodipicolinate + succinyl-CoA + H2O = (S)-2-succinylamino-6-oxoheptanedioate + CoA. Its pathway is amino-acid biosynthesis; L-lysine biosynthesis via DAP pathway; LL-2,6-diaminopimelate from (S)-tetrahydrodipicolinate (succinylase route): step 1/3. The protein is 2,3,4,5-tetrahydropyridine-2,6-dicarboxylate N-succinyltransferase of Rhodopseudomonas palustris (strain BisA53).